The following is an 85-amino-acid chain: V-type proton ATPase subunit f (85 aa).

2 consecutive transmembrane segments (helical) span residues 13–33 (CTGL…LFSI) and 56–76 (CLGA…QVIV).

V-ATPase is a heteromultimeric enzyme composed of a peripheral catalytic V1 complex (components A to H) attached to an integral membrane V0 proton pore complex (components: a, c, c', c'', d, e, f and VOA1).

Its subcellular location is the endoplasmic reticulum membrane. Its function is as follows. Accessory component of the V0 complex of vacuolar(H+)-ATPase (V-ATPase), a multisubunit enzyme composed of a peripheral complex (V1) that hydrolyzes ATP and a membrane integral complex (V0) that translocates protons. V-ATPase is responsible for acidifying and maintaining the pH of intracellular compartments. This Schizosaccharomyces pombe (strain 972 / ATCC 24843) (Fission yeast) protein is V-type proton ATPase subunit f.